A 546-amino-acid chain; its full sequence is Chaperonin GroEL (546 aa).

Residues 30 to 33 (TLGP), Lys-51, 87 to 91 (DGTTT), Gly-415, and Asp-496 each bind ATP. The tract at residues 527–546 (EKKAPAGAPGGMGGMGDMDF) is disordered. Positions 534–546 (APGGMGGMGDMDF) are enriched in gly residues.

This sequence belongs to the chaperonin (HSP60) family. As to quaternary structure, forms a cylinder of 14 subunits composed of two heptameric rings stacked back-to-back. Interacts with the co-chaperonin GroES.

The protein localises to the cytoplasm. It carries out the reaction ATP + H2O + a folded polypeptide = ADP + phosphate + an unfolded polypeptide.. Together with its co-chaperonin GroES, plays an essential role in assisting protein folding. The GroEL-GroES system forms a nano-cage that allows encapsulation of the non-native substrate proteins and provides a physical environment optimized to promote and accelerate protein folding. The chain is Chaperonin GroEL from Rhodospirillum centenum (strain ATCC 51521 / SW).